Reading from the N-terminus, the 324-residue chain is Acetyl-coenzyme A carboxylase carboxyl transferase subunit alpha (324 aa).

Residues 37–291 (ILEDKLENLE…NVVLQKTFEQ (255 aa)) form the CoA carboxyltransferase C-terminal domain.

It belongs to the AccA family. As to quaternary structure, acetyl-CoA carboxylase is a heterohexamer composed of biotin carboxyl carrier protein (AccB), biotin carboxylase (AccC) and two subunits each of ACCase subunit alpha (AccA) and ACCase subunit beta (AccD).

The protein localises to the cytoplasm. The enzyme catalyses N(6)-carboxybiotinyl-L-lysyl-[protein] + acetyl-CoA = N(6)-biotinyl-L-lysyl-[protein] + malonyl-CoA. It functions in the pathway lipid metabolism; malonyl-CoA biosynthesis; malonyl-CoA from acetyl-CoA: step 1/1. In terms of biological role, component of the acetyl coenzyme A carboxylase (ACC) complex. First, biotin carboxylase catalyzes the carboxylation of biotin on its carrier protein (BCCP) and then the CO(2) group is transferred by the carboxyltransferase to acetyl-CoA to form malonyl-CoA. This Bacillus cytotoxicus (strain DSM 22905 / CIP 110041 / 391-98 / NVH 391-98) protein is Acetyl-coenzyme A carboxylase carboxyl transferase subunit alpha.